The chain runs to 103 residues: Histone H4 (103 aa).

The segment covering 1–14 (MSGRGKGGKGLGKG) has biased composition (gly residues). The disordered stretch occupies residues 1 to 20 (MSGRGKGGKGLGKGGAKRHR). Position 2 is an N-acetylserine (Ser2). A Phosphoserine modification is found at Ser2. Arg4 is subject to Asymmetric dimethylarginine; by PRMT1; alternate. Arg4 is modified (citrulline; alternate). Arg4 carries the omega-N-methylarginine; by PRMT1; alternate modification. Arg4 carries the symmetric dimethylarginine; by PRMT5 and PRMT7; alternate modification. Lys6, Lys9, Lys13, and Lys17 each carry N6-(2-hydroxyisobutyryl)lysine; alternate. Residue Lys6 is modified to N6-acetyl-N6-methyllysine; alternate. N6-acetyllysine is present on residues Lys6, Lys9, Lys13, and Lys17. An N6-butyryllysine; alternate mark is found at Lys6, Lys9, Lys13, and Lys17. N6-glutaryllysine; alternate is present on Lys6. Lys6, Lys9, Lys13, and Lys17 each carry N6-lactoyllysine; alternate. Lys9 carries the N6-propionyllysine; alternate modification. Lys13 is modified (N6-acetyl-N6-methyllysine; alternate). Lys13 carries the N6-glutaryllysine; alternate modification. An N6-methyllysine; alternate modification is found at Lys13. Lys17 carries the N6-propionyllysine; alternate modification. A DNA-binding region spans residues 17-21 (KRHRK). Lys21 is modified (N6-methyllysine; alternate). Lys21 is subject to N6,N6,N6-trimethyllysine; alternate. Residue Lys21 is modified to N6,N6-dimethyllysine; alternate. At Lys21 the chain carries N6-methylated lysine. N6-(2-hydroxyisobutyryl)lysine; alternate occurs at positions 32 and 45. Lys32 carries the N6-acetyllysine modification. An N6-butyryllysine; alternate mark is found at Lys32 and Lys45. Lys32 is modified (N6-glutaryllysine; alternate). Lys32 carries the N6-lactoyllysine; alternate modification. 2 positions are modified to N6-propionyllysine; alternate: Lys32 and Lys45. Residue Lys32 is modified to N6-succinyllysine; alternate. Residue Lys32 forms a Glycyl lysine isopeptide (Lys-Gly) (interchain with G-Cter in UFM1); alternate linkage. Ser48 carries the phosphoserine; by PAK2 modification. A Phosphotyrosine modification is found at Tyr52. Residue Lys60 is modified to N6-acetyllysine. An N6-glutaryllysine; alternate mark is found at Lys60, Lys78, and Lys80. At Lys60 the chain carries N6-(2-hydroxyisobutyryl)lysine. Lys78 and Lys80 each carry N6-(2-hydroxyisobutyryl)lysine; alternate. An N6-butyryllysine; alternate mark is found at Lys78 and Lys80. Residue Lys78 is modified to N6-lactoyllysine; alternate. An N6-propionyllysine; alternate mark is found at Lys78 and Lys80. The residue at position 78 (Lys78) is an N6-succinyllysine. The residue at position 80 (Lys80) is an N6-acetyllysine. Position 89 is a phosphotyrosine (Tyr89). Lys92 is subject to N6-(2-hydroxyisobutyryl)lysine; alternate. Lys92 bears the N6-butyryllysine; alternate mark. Lys92 carries the N6-glutaryllysine; alternate modification. An N6-lactoyllysine; alternate modification is found at Lys92. Lys92 carries the N6-propionyllysine; alternate modification. Lys92 carries the post-translational modification N6-succinyllysine; alternate. Lys92 is modified (N6-acetyllysine; alternate). Residue Lys92 forms a Glycyl lysine isopeptide (Lys-Gly) (interchain with G-Cter in ubiquitin); alternate linkage.

Belongs to the histone H4 family. As to quaternary structure, the nucleosome is a histone octamer containing two molecules each of H2A, H2B, H3 and H4 assembled in one H3-H4 heterotetramer and two H2A-H2B heterodimers. The octamer wraps approximately 147 bp of DNA. Post-translationally, acetylation at Lys-6 (H4K5ac), Lys-9 (H4K8ac), Lys-13 (H4K12ac) and Lys-17 (H4K16ac) occurs in coding regions of the genome but not in heterochromatin. Citrullination at Arg-4 (H4R3ci) by PADI4 impairs methylation. In terms of processing, monomethylation and asymmetric dimethylation at Arg-4 (H4R3me1 and H4R3me2a, respectively) by PRMT1 favors acetylation at Lys-9 (H4K8ac) and Lys-13 (H4K12ac). Demethylation is performed by JMJD6. Symmetric dimethylation on Arg-4 (H4R3me2s) by the PRDM1/PRMT5 complex may play a crucial role in the germ-cell lineage. Post-translationally, monomethylated, dimethylated or trimethylated at Lys-21 (H4K20me1, H4K20me2, H4K20me3). Monomethylation is performed by KMT5A/SET8. Trimethylation is performed by KMT5B and KMT5C and induces gene silencing. Monomethylated at Lys-13 (H4K12me1) by N6AMT1; H4K12me1 modification is present at the promoters of numerous genes encoding cell cycle regulators. Acetyl-methylated at Lys-6 and Lys-13 (H4K5acme and H4K12acme, respectively), acetyl-methylation is an epigenetic mark of active chromatin associated with increased transcriptional initiation. Acetyl-methylation is formed by acetylation by EP300/p300 of lysine residues that are already monomethylated on the same side chain. H4K5acme and H4K12acme marks specifically bind BRD2. In terms of processing, phosphorylated by pak2 at Ser-48 (H4S47ph). This phosphorylation increases the association of H3.3-H4 with the histone chaperone HIRA, thus promoting nucleosome assembly of H3.3-H4 and inhibiting nucleosome assembly of H3.1-H4. Post-translationally, ubiquitinated by the CUL4-DDB-RBX1 complex in response to ultraviolet irradiation. This may weaken the interaction between histones and DNA and facilitate DNA accessibility to repair proteins. Monoubiquitinated at Lys-92 of histone H4 (H4K91ub1) in response to DNA damage. The exact role of H4K91ub1 in DNA damage response is still unclear but it may function as a licensing signal for additional histone H4 post-translational modifications such as H4 Lys-21 methylation (H4K20me). Sumoylated, which is associated with transcriptional repression. In terms of processing, butyrylation of histones marks active promoters and competes with histone acetylation. Post-translationally, glutarylation at Lys-92 (H4K91glu) destabilizes nucleosomes by promoting dissociation of the H2A-H2B dimers from nucleosomes. Ufmylated; monofmylated by UFL1 at Lys-32 (H4K31Ufm1) in response to DNA damage. In terms of processing, lactylated in macrophages by EP300/P300 by using lactoyl-CoA directly derived from endogenous or exogenous lactate, leading to stimulates gene transcription. Delactylated by SIRT3 at Lys-17 (H4K16la).

It localises to the nucleus. Its subcellular location is the chromosome. Core component of nucleosome. Nucleosomes wrap and compact DNA into chromatin, limiting DNA accessibility to the cellular machineries which require DNA as a template. Histones thereby play a central role in transcription regulation, DNA repair, DNA replication and chromosomal stability. DNA accessibility is regulated via a complex set of post-translational modifications of histones, also called histone code, and nucleosome remodeling. This is Histone H4 from Xenopus laevis (African clawed frog).